Consider the following 103-residue polypeptide: uncharacterized protein (103 aa).

This is an uncharacterized protein from Bacillus subtilis (strain 168).